Here is a 20-residue protein sequence, read N- to C-terminus: Thylakoid lumenal 20 kDa protein (20 aa).

Residues 1–20 (RDVDVGSFLPKSPSDPSMVL) form a disordered region.

It is found in the plastid. The protein resides in the chloroplast thylakoid lumen. This chain is Thylakoid lumenal 20 kDa protein, found in Spinacia oleracea (Spinach).